The sequence spans 204 residues: Somatotropin (204 aa).

Positions 1–17 are cleaved as a signal peptide; the sequence is MDRVVLMLSVLSLGVSS. Gln18 bears the Pyrrolidone carboxylic acid mark. His36 provides a ligand contact to Zn(2+). Cys69 and Cys177 are disulfide-bonded. Glu186 is a Zn(2+) binding site. Cys194 and Cys202 form a disulfide bridge.

This sequence belongs to the somatotropin/prolactin family.

It is found in the secreted. Functionally, growth hormone plays an important role in growth control and is involved in the regulation of several anabolic processes. Implicated as an osmoregulatory substance important for seawater adaptation. In Acanthopagrus latus (Yellowfin seabream), this protein is Somatotropin (gh).